The sequence spans 949 residues: Sensor histidine kinase RcsC (949 aa).

The Cytoplasmic portion of the chain corresponds to M1–R19. Residues A20 to L41 form a helical membrane-spanning segment. Residues H42–R313 are Periplasmic-facing. Residues M314–R335 form a helical membrane-spanning segment. The Cytoplasmic segment spans residues M336 to S949. A PAS domain is found at Q357 to Q425. Positions T476–G692 constitute a Histidine kinase domain. The residue at position 479 (H479) is a Phosphohistidine; by autocatalysis. Positions S705–S805 constitute an ABL domain. The region spanning M826–A940 is the Response regulatory domain. D875 bears the 4-aspartylphosphate mark.

This sequence belongs to the RcsC family. Interacts with RcsD. Autophosphorylated. Activation probably requires a transfer of a phosphate group from a His in the transmitter domain to an Asp in the receiver domain.

It is found in the cell inner membrane. The enzyme catalyses ATP + protein L-histidine = ADP + protein N-phospho-L-histidine.. With respect to regulation, the Rcs phosphorelay may be activated by RcsF. DjlA, LolA and OmpG might act as a regulator of the phosphorelay. Activity is probably up-regulated by YmgA/AriR, and possibly down-regulated by YcgZ, all 3 are connector proteins providing additional signal input into signaling system. Its function is as follows. Component of the Rcs signaling system, which controls transcription of numerous genes. RcsC functions as a membrane-associated protein kinase that phosphorylates RcsD in response to environmental signals. The phosphoryl group is then transferred to the response regulator RcsB. RcsC also has phosphatase activity. The system controls expression of genes involved in colanic acid capsule synthesis, biofilm formation and cell division. The chain is Sensor histidine kinase RcsC from Escherichia coli (strain K12).